Here is a 468-residue protein sequence, read N- to C-terminus: Dimethylamine methyltransferase MtbB1 (468 aa).

Pyl-356 is a non-standard amino acid (pyrrolysine).

Belongs to the dimethylamine methyltransferase family.

It carries out the reaction Co(I)-[dimethylamine-specific corrinoid protein] + dimethylamine + H(+) = methyl-Co(III)-[dimethylamine-specific corrinoid protein] + methylamine. It participates in one-carbon metabolism; methanogenesis from dimethylamine. Catalyzes the transfer of a methyl group from dimethylamine to the corrinoid cofactor of MtbC. The protein is Dimethylamine methyltransferase MtbB1 (mtbB1) of Methanosarcina mazei (strain ATCC BAA-159 / DSM 3647 / Goe1 / Go1 / JCM 11833 / OCM 88) (Methanosarcina frisia).